The following is a 358-amino-acid chain: Leukotriene B4 receptor 2 (358 aa).

The Extracellular portion of the chain corresponds to 1-24 (MSVCYRPPGNETLLSWKTSRATGT). The N-linked (GlcNAc...) asparagine glycan is linked to asparagine 10. Residues 25 to 45 (AFLLLAALLGLPGNGFVVWSL) form a helical membrane-spanning segment. The Cytoplasmic segment spans residues 46 to 60 (AGWRPARGRPLAATL). The chain crosses the membrane as a helical span at residues 61–81 (VLHLALADGAVLLLTPLFVAF). At 82–96 (LTRQAWPLGQAGCKA) the chain is on the extracellular side. The chain crosses the membrane as a helical span at residues 97-117 (VYYVCALSMYASVLLTGLLSL). Topologically, residues 118 to 140 (QRCLAVTRPFLAPRLRSPALARR) are cytoplasmic. Residues 141-161 (LLLAVWLAALLLAVPAAVYRH) form a helical membrane-spanning segment. At 162 to 185 (LWRDRVCQLCHPSPVHAAAHLSLE) the chain is on the extracellular side. The helical transmembrane segment at 186–206 (TLTAFVLPFGLMLGCYSVTLA) threads the bilayer. The Cytoplasmic portion of the chain corresponds to 207–224 (RLRGARWGSGRHGARVGR). Residues 225 to 245 (LVSAIVLAFGLLWAPYHAVNL) form a helical membrane-spanning segment. Residues 246–275 (LQAVAALAPPEGALAKLGGAGQAARAGTTA) lie on the Extracellular side of the membrane. A helical membrane pass occupies residues 276–296 (LAFFSSSVNPVLYVFTAGDLL). The Cytoplasmic portion of the chain corresponds to 297 to 358 (PRAGPRFLTR…MEKDGPEWDL (62 aa)). The segment at 311–358 (SGEARGGGRSREGTMELRTTPQLKVVGQGRGNGDPGGGMEKDGPEWDL) is disordered. Over residues 338 to 348 (QGRGNGDPGGG) the composition is skewed to gly residues. A compositionally biased stretch (basic and acidic residues) spans 349-358 (MEKDGPEWDL).

The protein belongs to the G-protein coupled receptor 1 family. As to expression, widely expressed.

Its subcellular location is the cell membrane. Its function is as follows. Low-affinity receptor for leukotrienes including leukotriene B4. Mediates chemotaxis of granulocytes and macrophages. The response is mediated via G-proteins that activate a phosphatidylinositol-calcium second messenger system. The rank order of affinities for the leukotrienes is LTB4 &gt; 12-epi-LTB4 &gt; LTB5 &gt; LTB3. The polypeptide is Leukotriene B4 receptor 2 (LTB4R2) (Homo sapiens (Human)).